A 718-amino-acid chain; its full sequence is Polyribonucleotide nucleotidyltransferase (718 aa).

Mg(2+) is bound by residues Asp-496 and Asp-502. Positions 563-622 (PRLLTIKIDSDMIGLVIGPGGKTIKGITEETGAKIDIEDDGTVTISAVDENKAKRARNII) constitute a KH domain. The 69-residue stretch at 632 to 700 (GDVYAGRITR…NKGRINLTRL (69 aa)) folds into the S1 motif domain.

The protein belongs to the polyribonucleotide nucleotidyltransferase family. The cofactor is Mg(2+).

It is found in the cytoplasm. It catalyses the reaction RNA(n+1) + phosphate = RNA(n) + a ribonucleoside 5'-diphosphate. Functionally, involved in mRNA degradation. Catalyzes the phosphorolysis of single-stranded polyribonucleotides processively in the 3'- to 5'-direction. This chain is Polyribonucleotide nucleotidyltransferase, found in Nostoc punctiforme (strain ATCC 29133 / PCC 73102).